The sequence spans 331 residues: Carbonic anhydrase-related protein 11 (331 aa).

The signal sequence occupies residues 1–23; it reads MGGAARLSAPRALVLWAVLGAAA. The Alpha-carbonic anhydrase domain occupies 33-306; the sequence is DWWSYKDNLQ…LAHRALRGNR (274 aa). N118, N170, N189, and N263 each carry an N-linked (GlcNAc...) asparagine glycan. Residues 303 to 331 form a disordered region; the sequence is RGNRDPRHPERRCRGPNYRLHVDGAPHGR. The segment covering 322 to 331 has biased composition (basic and acidic residues); it reads LHVDGAPHGR.

It belongs to the alpha-carbonic anhydrase family.

The protein resides in the secreted. Does not have a catalytic activity. This chain is Carbonic anhydrase-related protein 11 (CA11), found in Sus scrofa (Pig).